Here is a 366-residue protein sequence, read N- to C-terminus: MLPSQTPAQGSGRFLLLSPPSLSSHPEKLNAILGLHARESTDLQMLDRLALGLVSLPQSTYDVVLLLTGADNTLAETYRLVSRGVLQGVVNSLKPGGKLRNRDNQIWGSGSDSAAGLGSSDGGGGGGGGEKKSSSEQAFRNEAILAGLVFDDRGELAKPDFGAQQAVPLKLGRKKNLGDSAFGNGTVELPASNGVRVTAGATTTTPTTTTTTTINSSTPSGVRFIDFSDDFGVPMVEETQELDEELIDEEELLGEFDMGRPIVQPPECRPKAGKRRRACKDCTCGLSQKLEAEDRAKRANADKALETLKLGTNDLAEVDFTVQGKVGSCGNCALGDAFRCDGCPYIGLPAFKPGEEVRLLNNDVQL.

The interval 8 to 167 (AQGSGRFLLL…KPDFGAQQAV (160 aa)) is N-terminal SAM-like domain. The segment at 100 to 136 (RNRDNQIWGSGSDSAAGLGSSDGGGGGGGGEKKSSSE) is disordered. Over residues 108 to 118 (GSGSDSAAGLG) the composition is skewed to low complexity. Residues 119–128 (SSDGGGGGGG) are compositionally biased toward gly residues. The interval 168 to 258 (PLKLGRKKNL…EEELLGEFDM (91 aa)) is linker. Positions 268, 279, 282, and 284 each coordinate [2Fe-2S] cluster. Residues 268–284 (CRPKAGKRRRACKDCTC) are fe-S binding site A. Residues cysteine 329, cysteine 332, cysteine 340, and cysteine 343 each contribute to the [4Fe-4S] cluster site. 2 consecutive short sequence motifs (cx2C motif) follow at residues 329 to 332 (CGNC) and 340 to 343 (CDGC). The interval 329–343 (CGNCALGDAFRCDGC) is fe-S binding site B.

The protein belongs to the anamorsin family. As to quaternary structure, monomer. Interacts with TAH18. Interacts with MIA40. Requires [2Fe-2S] cluster as cofactor. [4Fe-4S] cluster is required as a cofactor.

Its subcellular location is the cytoplasm. It localises to the mitochondrion intermembrane space. Its function is as follows. Component of the cytosolic iron-sulfur (Fe-S) protein assembly (CIA) machinery required for the maturation of extramitochondrial Fe-S proteins. Part of an electron transfer chain functioning in an early step of cytosolic Fe-S biogenesis, facilitating the de novo assembly of a [4Fe-4S] cluster on the scaffold complex CFD1-NBP35. Electrons are transferred to DRE2 from NADPH via the FAD- and FMN-containing protein TAH18. TAH18-DRE2 are also required for the assembly of the diferric tyrosyl radical cofactor of ribonucleotide reductase (RNR), probably by providing electrons for reduction during radical cofactor maturation in the catalytic small subunit RNR2. The sequence is that of Fe-S cluster assembly protein DRE2 from Paracoccidioides lutzii (strain ATCC MYA-826 / Pb01) (Paracoccidioides brasiliensis).